Consider the following 237-residue polypeptide: Uridylate kinase (237 aa).

11-14 lines the ATP pocket; sequence KLSG. Glycine 53 provides a ligand contact to UMP. 2 residues coordinate ATP: glycine 54 and arginine 58. Residues aspartate 73 and 134–141 each bind UMP; that span reads TGNPFFTT. ATP contacts are provided by threonine 161, tyrosine 167, and aspartate 170.

This sequence belongs to the UMP kinase family. Homohexamer.

The protein resides in the cytoplasm. The catalysed reaction is UMP + ATP = UDP + ADP. The protein operates within pyrimidine metabolism; CTP biosynthesis via de novo pathway; UDP from UMP (UMPK route): step 1/1. Inhibited by UTP. Its function is as follows. Catalyzes the reversible phosphorylation of UMP to UDP. The sequence is that of Uridylate kinase from Nitrosomonas europaea (strain ATCC 19718 / CIP 103999 / KCTC 2705 / NBRC 14298).